Reading from the N-terminus, the 238-residue chain is MTRVITFVGNVTLLSKVIVKNKLTDVYVDQSYLYKVSDNGVKLPSTNEKAIFFKQDDINIQNLVSEGDGEITKGVGEKVRFHFVDTGIPPFKTSPSLMYSDGSDNEIVEMINRRVRIAKLISLIVNEIDDDLMFIDSDITVNNIDALLYSMSNRTKIGTLCIPAIAKPYNFVIMFCASTNFYLPREMRNDLLNVIQRYIASAKYVNTPVDIFINRELGSTPITWFGVCHHKYDKEWCI.

This is an uncharacterized protein from Acidianus filamentous virus 2 (isolate Italy/Pozzuoli) (AFV-2).